Here is a 295-residue protein sequence, read N- to C-terminus: Tyrosine recombinase XerC (295 aa).

Positions 1–85 (MQNALQKYYD…ALRQFLAYLV (85 aa)) constitute a Core-binding (CB) domain. The 180-residue stretch at 106 to 285 (YLPKNIDQEQ…DFKHLTDVYD (180 aa)) folds into the Tyr recombinase domain. Catalysis depends on residues Arg145, Lys169, His237, Arg240, and His263. Tyr272 (O-(3'-phospho-DNA)-tyrosine intermediate) is an active-site residue.

This sequence belongs to the 'phage' integrase family. XerC subfamily. In terms of assembly, forms a cyclic heterotetrameric complex composed of two molecules of XerC and two molecules of XerD.

It is found in the cytoplasm. In terms of biological role, site-specific tyrosine recombinase, which acts by catalyzing the cutting and rejoining of the recombining DNA molecules. The XerC-XerD complex is essential to convert dimers of the bacterial chromosome into monomers to permit their segregation at cell division. It also contributes to the segregational stability of plasmids. This Actinobacillus succinogenes (strain ATCC 55618 / DSM 22257 / CCUG 43843 / 130Z) protein is Tyrosine recombinase XerC.